A 419-amino-acid polypeptide reads, in one-letter code: WD repeat-containing protein JIP5 (419 aa).

WD repeat units lie at residues 4–45 (ALSS…HNQS), 66–105 (PSHKSCRGVAFDASGSNLFCIFKDKSIIALDPSDGHVKAR), 108–147 (RAHESAPSRILPIHEGLMATGDDDGIVRLWDPRCPPEGDA), 180–220 (DQED…KGVE), 224–263 (DQEDELLSIASIKNGKKLVVGTQLGVLSLWAPDRGLLDHA), 268–308 (GHPS…GIVG), and 351–390 (DAAEPEPAVMLVSDEAHLIARSADGSDESAGESDVMQPPP). A disordered region spans residues 172–192 (DPPRSKKKDQEDDLKRKRDEE). Residues 372–408 (SADGSDESAGESDVMQPPPATKRRTAKSKAGKKSVHD) are disordered. Residues 392-404 (TKRRTAKSKAGKK) show a composition bias toward basic residues.

The protein belongs to the WD repeat WDR55 family.

The protein resides in the nucleus. The protein localises to the nucleolus. This chain is WD repeat-containing protein JIP5 (JIP5), found in Malassezia globosa (strain ATCC MYA-4612 / CBS 7966) (Dandruff-associated fungus).